The following is a 463-amino-acid chain: Heterogeneous nuclear ribonucleoprotein K (463 aa).

N-acetylmethionine is present on methionine 1. Residues 1–37 form a disordered region; the sequence is METEQPEETFPNTETNGEFGKRPAEDMEEEQAFKRSR. A necessary for interaction with DDX1 region spans residues 1 to 276; that stretch reads METEQPEETF…GRGGRPMPPS (276 aa). Residues 19–37 are compositionally biased toward basic and acidic residues; it reads FGKRPAEDMEEEQAFKRSR. Position 34 is an N6-acetyllysine; alternate (lysine 34). Residue lysine 34 forms a Glycyl lysine isopeptide (Lys-Gly) (interchain with G-Cter in SUMO1); alternate linkage. A Glycyl lysine isopeptide (Lys-Gly) (interchain with G-Cter in SUMO2); alternate cross-link involves residue lysine 34. Residues 35 to 197 form an interaction with ASFV p30 region; it reads RSRNTDEMVE…STDRVVLIGG (163 aa). Serine 36 carries the phosphoserine modification. Threonine 39 bears the Phosphothreonine mark. The KH 1 domain maps to 42–104; the sequence is MVELRILLQS…ETIGEILKKI (63 aa). Glycyl lysine isopeptide (Lys-Gly) (interchain with G-Cter in SUMO2) cross-links involve residues lysine 52 and lysine 60. Repeat copies occupy residues 54–76 and 59–62. Residues 54 to 421 form a 2 X 22 AA approximate repeats region; that stretch reads AGAVIGKGGK…QIRHESGASI (368 aa). The segment at 59 to 407 is 5 X 4 AA repeats of G-X-G-G; it reads GKGGKNIKAL…LAGSIIGKGG (349 aa). Residues serine 75 and serine 116 each carry the phosphoserine modification. The region spanning 144–209 is the KH 2 domain; that stretch reads DCELRLLIHQ…DRVVECIKII (66 aa). Lysine 163 is covalently cross-linked (Glycyl lysine isopeptide (Lys-Gly) (interchain with G-Cter in SUMO1); alternate). Lysine 163 is covalently cross-linked (Glycyl lysine isopeptide (Lys-Gly) (interchain with G-Cter in SUMO2); alternate). N6-acetyllysine is present on lysine 198. The interval 209-337 is interaction with ZIK1; it reads ILDLISESPI…RPGDRYDGMV (129 aa). 2 positions are modified to phosphoserine: serine 214 and serine 216. Lysine 219 participates in a covalent cross-link: Glycyl lysine isopeptide (Lys-Gly) (interchain with G-Cter in SUMO2); alternate. At lysine 219 the chain carries N6-succinyllysine; alternate. Residues 236 to 273 form an RNA-binding RGG-box region; that stretch reads YGGFTMMFDDRRGRPVGFPMRGRGGFDRMPPGRGGRPM. 3 tandem repeats follow at residues 245–250, 257–260, and 267–270. The tract at residues 245–329 is 2 X 6 AA approximate repeats; the sequence is DRRGRPVGFP…LMAYDRRGRP (85 aa). The tract at residues 250–329 is disordered; that stretch reads PVGFPMRGRG…LMAYDRRGRP (80 aa). Residues 252–266 are compositionally biased toward low complexity; it reads GFPMRGRGGFDRMPP. Positions 276-285 are enriched in basic and acidic residues; it reads SRRDYDDMSP. Residue serine 284 is modified to Phosphoserine. A 3-4 repeat occupies 295–298; it reads GRGG. Omega-N-methylarginine is present on arginine 316. The stretch at 324–329 is one 2-2 repeat; it reads DRRGRP. Arginine 377 is modified (omega-N-methylarginine). Serine 379 carries the phosphoserine modification. Tyrosine 380 is modified (phosphotyrosine). The KH 3 domain occupies 387–451; it reads IITTQVTIPK…DQIQNAQYLL (65 aa). A run of 2 repeats spans residues 399–421 and 404–407. The residue at position 405 (lysine 405) is an N6-acetyllysine; alternate. Residue lysine 405 forms a Glycyl lysine isopeptide (Lys-Gly) (interchain with G-Cter in SUMO2); alternate linkage. Serine 420 carries the post-translational modification Phosphoserine. Lysine 422 participates in a covalent cross-link: Glycyl lysine isopeptide (Lys-Gly) (interchain with G-Cter in SUMO1); alternate. Residue lysine 422 forms a Glycyl lysine isopeptide (Lys-Gly) (interchain with G-Cter in SUMO2); alternate linkage. Residue lysine 422 forms a Glycyl lysine isopeptide (Lys-Gly) (interchain with G-Cter in SUMO); alternate linkage.

Identified in the spliceosome C complex. Part of a transcription inhibitory ribonucleoprotein complex composed at least of the circular RNA circZNF827, ZNF827 and HNRNPL. Interacts with RBM42 and ZIK1. Interacts with BRDT. Interacts with ANKRD28. Interacts with ASFV p30 protein. Interacts with DDX1. Interacts with MDM2; this interaction leads to ubiquitination and proteasomal degradation. Interacts with p53/TP53. Interacts with IVNS1ABP (via BACK domain); the interaction is direct. Interacts with PPIA/CYPA. In terms of assembly, (Microbial infection) Interacts with HCV core protein. Arg-296 and Arg-299 are dimethylated, probably to asymmetric dimethylarginine. In terms of processing, sumoylated by CBX4. Sumoylation is increased upon DNA damage, such as that produced by doxorubicin, etoposide, UV light and camptothecin, due to enhanced CBX4 phosphorylation by HIPK2 under these conditions. Post-translationally, ubiquitinated by MDM2. Doxorubicin treatment does not affect monoubiquitination, but slightly decreases HNRNPK poly-ubiquitination. O-glycosylated (O-GlcNAcylated), in a cell cycle-dependent manner.

The protein resides in the cytoplasm. It localises to the nucleus. Its subcellular location is the nucleoplasm. It is found in the cell projection. The protein localises to the podosome. Its function is as follows. One of the major pre-mRNA-binding proteins. Binds tenaciously to poly(C) sequences. Likely to play a role in the nuclear metabolism of hnRNAs, particularly for pre-mRNAs that contain cytidine-rich sequences. Can also bind poly(C) single-stranded DNA. Plays an important role in p53/TP53 response to DNA damage, acting at the level of both transcription activation and repression. When sumoylated, acts as a transcriptional coactivator of p53/TP53, playing a role in p21/CDKN1A and 14-3-3 sigma/SFN induction. As far as transcription repression is concerned, acts by interacting with long intergenic RNA p21 (lincRNA-p21), a non-coding RNA induced by p53/TP53. This interaction is necessary for the induction of apoptosis, but not cell cycle arrest. As part of a ribonucleoprotein complex composed at least of ZNF827, HNRNPL and the circular RNA circZNF827 that nucleates the complex on chromatin, may negatively regulate the transcription of genes involved in neuronal differentiation. The sequence is that of Heterogeneous nuclear ribonucleoprotein K (HNRNPK) from Homo sapiens (Human).